We begin with the raw amino-acid sequence, 279 residues long: Tumor protein p63-regulated gene 1 protein (279 aa).

Residues 1–49 form a disordered region; that stretch reads MSTIGSFDGFQPVSLKQEEEDQPSENDHLSTKEGNSGKDPGSRRISRQQ. Residues 72 to 259 enclose the hSac2 domain; sequence VTRPGAIETA…ILIETYTGLM (188 aa).

It belongs to the TPRG1 family. As to expression, highly expressed in skin. Also detected at low levels in tongue and esophagus.

The protein localises to the cytoplasm. This chain is Tumor protein p63-regulated gene 1 protein, found in Mus musculus (Mouse).